Reading from the N-terminus, the 495-residue chain is Probable serine/threonine-protein kinase DDB_G0292354 (495 aa).

The region spanning 16–275 is the Protein kinase domain; it reads WTVVKKIGQG…PNYVFLQTLL (260 aa). Residues 22 to 30 and lysine 45 each bind ATP; that span reads IGQGAFGEI. Aspartate 136 serves as the catalytic Proton acceptor. The tract at residues 293–469 is disordered; that stretch reads EVQTNSGASS…NGNGSNSQPI (177 aa). 2 stretches are compositionally biased toward low complexity: residues 295–333 and 354–364; these read QTNS…NSSA and NNSNNNNNNNN. The span at 385–395 shows a compositional bias: polar residues; it reads ESNSQIANSSE. Residues 435–466 are compositionally biased toward low complexity; that stretch reads SNNNNINNNNNNYNNNNNNNNNSHMNGNGSNS.

The protein belongs to the protein kinase superfamily. CK1 Ser/Thr protein kinase family.

The chain is Probable serine/threonine-protein kinase DDB_G0292354 from Dictyostelium discoideum (Social amoeba).